The following is a 397-amino-acid chain: F-box protein At5g25290 (397 aa).

One can recognise an F-box domain in the interval 11 to 56 (VTLWSEIPMDILRSVFERLSFVDLHRAKIVCSHWYSCSKQSFLRKT).

This chain is F-box protein At5g25290, found in Arabidopsis thaliana (Mouse-ear cress).